The sequence spans 252 residues: tRNA pseudouridine synthase A (252 aa).

Asp54 serves as the catalytic Nucleophile. Tyr112 provides a ligand contact to substrate.

The protein belongs to the tRNA pseudouridine synthase TruA family. Homodimer.

It catalyses the reaction uridine(38/39/40) in tRNA = pseudouridine(38/39/40) in tRNA. Its function is as follows. Formation of pseudouridine at positions 38, 39 and 40 in the anticodon stem and loop of transfer RNAs. This chain is tRNA pseudouridine synthase A, found in Oenococcus oeni (strain ATCC BAA-331 / PSU-1).